A 571-amino-acid polypeptide reads, in one-letter code: Leucine aminopeptidase A2, chloroplastic (571 aa).

Residues M1–L42 constitute a chloroplast transit peptide. Mg(2+) contacts are provided by K342 and D347. K354 is a catalytic residue. Residues D367, D427, and E429 each coordinate Mg(2+). R431 is a catalytic residue.

Belongs to the peptidase M17 family. In terms of assembly, homohexamer (dimer of homotrimers). Mg(2+) serves as cofactor. Expressed during floral development. Expressed in healthy and senescent leaves, cotyledons (emergence from seed coats), pistils, sepals, petals, stamens, and floral buds (at protein level).

It localises to the plastid. Its subcellular location is the chloroplast. The enzyme catalyses Release of an N-terminal amino acid, Xaa-|-Yaa-, in which Xaa is preferably Leu, but may be other amino acids including Pro although not Arg or Lys, and Yaa may be Pro. Amino acid amides and methyl esters are also readily hydrolyzed, but rates on arylamides are exceedingly low.. The catalysed reaction is Release of N-terminal proline from a peptide.. Functionally, catalyzes the removal of unsubstituted N-terminal amino acids from various peptides. When associated as homohexamer, catalyzes the proteolyzes of Xaa-Leu dipeptides. Possesses leucine aminopeptidase activity against the model substrate leucine-amido methyl coumarin. Presumably involved in the processing and regular turnover of intracellular proteins. Regulates wound signaling and has a role in insect defense. Its function is as follows. Functions as a molecular chaperone to protect proteins from heat-induced damage. The sequence is that of Leucine aminopeptidase A2, chloroplastic from Solanum lycopersicum (Tomato).